The sequence spans 336 residues: Aldo-keto reductase str7 (336 aa).

Asp57 serves as a coordination point for NADP(+). Catalysis depends on Tyr62, which acts as the Proton donor. His124 provides a ligand contact to substrate. NADP(+)-binding positions include 154 to 155 (SE), Gln174, 206 to 220 (SPLGRGLLTGQYKSP), and 283 to 291 (KKIKYLEEN).

It belongs to the aldo/keto reductase family. Aldo/keto reductase 2 subfamily.

Its pathway is mycotoxin biosynthesis. In terms of biological role, aldo-keto reductase; part of the gene cluster that mediates the biosynthesis of strobilurin A, an antifungal polyketide that contains a key beta-methoxyacrylate toxophore that targets the complex III of the mitochondrial electron transport chain. Strobilurin biosynthesis begins with construction of benzoyl CoA by step-wise elimination of ammonia from phenylalanine by the phenylalanine ammonia-lyase str11, oxygenation by str8 and retro-Claisen reaction to form benzoic acid, which is activated to its CoA thiolester benzoyl CoA by the dedicated CoA ligase str10. Benzoyl CoA forms the starter unit for the highly reducing polyketide synthase stpks1 that produces the polyketide prestrobilutin A. The FAD-dependent oxygenase str9 then catalyzes the key oxidative rearrangement responsible for the creation of the beta-methoxyacrylate toxophore. Str9 performs epoxidation of the 2,3 olefin of prestrobilutin A, followed by Meinwald rearrangement to furnish the aldehyde intermediate. Rapid enolization of the aldehyde intermediate would give the beta-methoxyacrylate skeleton and methylations catalyzed by str2 and str3 complete the synthesis and lead to the production of strobilurin A. The short-chain dehydrogenase stl2 and the dehydrogenase str4 play a role in the shunt pathway leading to the production of bolineol. The cluster encodes no obvious halogenase gene that could be involved in production of strobilurin B, nor any obvious dimethylallyl-transferase that could be involved in the production of strobilurin G. It is possible that unknown proteins encoded in, or near, the cluster (such as str1 or stl1) may form new classes of halogenases or dimethylally-transferases, or that the responsible genes are located elsewhere on the genome. Similarly, proteins encoded by str5/str6 hydrolases appear to have no chemical role in the biosynthesis of strobilurin A. Finally, no obvious self-resistance gene is found within the cluster. The protein is Aldo-keto reductase str7 of Strobilurus tenacellus.